A 314-amino-acid polypeptide reads, in one-letter code: Acetyl-coenzyme A carboxylase carboxyl transferase subunit alpha (314 aa).

Residues 32–289 (EIDMLEASLA…KRTFESHLSE (258 aa)) form the CoA carboxyltransferase C-terminal domain.

It belongs to the AccA family. Acetyl-CoA carboxylase is a heterohexamer composed of biotin carboxyl carrier protein (AccB), biotin carboxylase (AccC) and two subunits each of ACCase subunit alpha (AccA) and ACCase subunit beta (AccD).

It is found in the cytoplasm. The catalysed reaction is N(6)-carboxybiotinyl-L-lysyl-[protein] + acetyl-CoA = N(6)-biotinyl-L-lysyl-[protein] + malonyl-CoA. It functions in the pathway lipid metabolism; malonyl-CoA biosynthesis; malonyl-CoA from acetyl-CoA: step 1/1. Its function is as follows. Component of the acetyl coenzyme A carboxylase (ACC) complex. First, biotin carboxylase catalyzes the carboxylation of biotin on its carrier protein (BCCP) and then the CO(2) group is transferred by the carboxyltransferase to acetyl-CoA to form malonyl-CoA. This chain is Acetyl-coenzyme A carboxylase carboxyl transferase subunit alpha, found in Staphylococcus saprophyticus subsp. saprophyticus (strain ATCC 15305 / DSM 20229 / NCIMB 8711 / NCTC 7292 / S-41).